The following is a 1140-amino-acid chain: Protein FAM184A (1140 aa).

Coiled-coil stretches lie at residues 57 to 256, 296 to 800, and 868 to 907; these read ALNT…NKAQ, AILR…IEME, and RITD…LEFK. The interval 1063–1128 is disordered; sequence PNLSALESGG…EASPVASPDP (66 aa).

Belongs to the FAM184 family.

Its subcellular location is the cytoplasm. The protein resides in the P-body. It is found in the cytoskeleton. The protein localises to the microtubule organizing center. It localises to the centrosome. Its subcellular location is the centriolar satellite. This chain is Protein FAM184A, found in Homo sapiens (Human).